The primary structure comprises 315 residues: Cell division protein FtsZ (315 aa).

Residues 55 to 57 (GTG), Glu98, Arg102, and Asp146 each bind GTP.

Belongs to the FtsZ family. Homodimer. Polymerizes to form a dynamic ring structure in a strictly GTP-dependent manner. Interacts directly with several other division proteins.

The protein localises to the cytoplasm. Its function is as follows. Essential cell division protein that forms a contractile ring structure (Z ring) at the future cell division site. The regulation of the ring assembly controls the timing and the location of cell division. One of the functions of the FtsZ ring is to recruit other cell division proteins to the septum to produce a new cell wall between the dividing cells. Binds GTP and shows GTPase activity. This is Cell division protein FtsZ from Wolbachia pipientis.